Consider the following 215-residue polypeptide: Cytochrome b6 (215 aa).

A helical transmembrane segment spans residues 32-52 (IFYCLGGITLTCFLVQVATGF). Heme c is bound at residue Cys35. Residues His86 and His100 each coordinate heme b. 3 helical membrane passes run 90–110 (ASMM…TGGF), 116–136 (LTWV…VTGY), and 186–206 (LHTF…FPMI). Heme b is bound by residues His187 and His202.

The protein belongs to the cytochrome b family. PetB subfamily. In terms of assembly, the 4 large subunits of the cytochrome b6-f complex are cytochrome b6, subunit IV (17 kDa polypeptide, PetD), cytochrome f and the Rieske protein, while the 4 small subunits are PetG, PetL, PetM and PetN. The complex functions as a dimer. Heme b serves as cofactor. It depends on heme c as a cofactor.

The protein resides in the plastid. Its subcellular location is the chloroplast thylakoid membrane. Component of the cytochrome b6-f complex, which mediates electron transfer between photosystem II (PSII) and photosystem I (PSI), cyclic electron flow around PSI, and state transitions. This is Cytochrome b6 from Saccharum hybrid (Sugarcane).